The chain runs to 513 residues: EGF-like domain-containing protein 1 (513 aa).

Residues 1–21 (MMHTFLRRLCVVALCLGYIKA) form the signal peptide. The EGF-like domain occupies 72–108 (PTALCGPPCLNGGECYEPTVGTYMCMCPEAFYGNKCE). 3 disulfide bridges follow: cysteine 76–cysteine 86, cysteine 80–cysteine 96, and cysteine 98–cysteine 107. The 250-residue stretch at 115–364 (ECSGTEITIN…TSCDSVVCPS (250 aa)) folds into the ZP domain. The tract at residues 356–411 (SCDSVVCPSPPQSVPSNPQNIPPANPQNIPPANPQNIPPANPQISPSSSQRKRRAA) is disordered. Pro residues predominate over residues 375–396 (NIPPANPQNIPPANPQNIPPAN). N-linked (GlcNAc...) asparagine glycosylation is found at asparagine 438 and asparagine 503.

In terms of tissue distribution, component of the acid-insoluble organic matrix of calcified layers of the shell (at protein level).

It localises to the secreted. This chain is EGF-like domain-containing protein 1, found in Lottia gigantea (Giant owl limpet).